The chain runs to 435 residues: Citrate synthase (435 aa).

Residues His311 and Asp370 contribute to the active site.

This sequence belongs to the citrate synthase family.

It carries out the reaction oxaloacetate + acetyl-CoA + H2O = citrate + CoA + H(+). It participates in carbohydrate metabolism; tricarboxylic acid cycle; isocitrate from oxaloacetate: step 1/2. In Rickettsia bellii (strain RML369-C), this protein is Citrate synthase (gltA).